The sequence spans 194 residues: Chitin synthase 2 (194 aa).

This sequence belongs to the chitin synthase family. Class III subfamily.

The protein resides in the cell membrane. The catalysed reaction is [(1-&gt;4)-N-acetyl-beta-D-glucosaminyl](n) + UDP-N-acetyl-alpha-D-glucosamine = [(1-&gt;4)-N-acetyl-beta-D-glucosaminyl](n+1) + UDP + H(+). Functionally, polymerizes chitin, a structural polymer of the cell wall and septum, by transferring the sugar moiety of UDP-GlcNAc to the non-reducing end of the growing chitin polymer. The protein is Chitin synthase 2 (CHS2) of Ajellomyces capsulatus (Darling's disease fungus).